The chain runs to 181 residues: TATA-box-binding protein (181 aa).

2 consecutive repeat copies span residues 7–83 and 98–173.

The protein belongs to the TBP family.

In terms of biological role, general factor that plays a role in the activation of archaeal genes transcribed by RNA polymerase. Binds specifically to the TATA box promoter element which lies close to the position of transcription initiation. The sequence is that of TATA-box-binding protein from Methanococcus maripaludis (strain DSM 14266 / JCM 13030 / NBRC 101832 / S2 / LL).